Reading from the N-terminus, the 317-residue chain is Tyrosine--tRNA ligase (317 aa).

Tyr-33 is a binding site for L-tyrosine. Positions 38-46 (PSGKIHMGH) match the 'HIGH' region motif. Residues Tyr-155, Gln-159, Asp-162, and Gln-177 each coordinate L-tyrosine. Positions 211–215 (KMASS) match the 'KMSKS' region motif. Ser-214 is an ATP binding site.

It belongs to the class-I aminoacyl-tRNA synthetase family. TyrS type 3 subfamily. Homodimer.

The protein localises to the cytoplasm. The enzyme catalyses tRNA(Tyr) + L-tyrosine + ATP = L-tyrosyl-tRNA(Tyr) + AMP + diphosphate + H(+). In terms of biological role, catalyzes the attachment of tyrosine to tRNA(Tyr) in a two-step reaction: tyrosine is first activated by ATP to form Tyr-AMP and then transferred to the acceptor end of tRNA(Tyr). The polypeptide is Tyrosine--tRNA ligase (Methanosarcina acetivorans (strain ATCC 35395 / DSM 2834 / JCM 12185 / C2A)).